Here is a 1131-residue protein sequence, read N- to C-terminus: Inositol hexakisphosphate and diphosphoinositol-pentakisphosphate kinase 2 (1131 aa).

The interval aspartate 21–proline 53 is disordered. Residues aspartate 25–histidine 38 show a composition bias toward basic and acidic residues. Acidic residues predominate over residues threonine 39 to serine 52. Substrate is bound at residue lysine 67–lysine 68. ATP-binding positions include arginine 148, lysine 201, histidine 208, arginine 227, glutamate 251–methionine 254, and aspartate 260–lysine 262. Arginine 227–lysine 228 contributes to the substrate binding site. Substrate-binding residues include lysine 262 and arginine 276. Residues serine 278, aspartate 323, and aspartate 335–asparagine 337 each bind ATP. Position 340–343 (serine 340–lysine 343) interacts with substrate. Residues proline 385–valine 456 are polyphosphoinositide-binding domain. The disordered stretch occupies residues lysine 912–valine 951. The span at glutamate 934 to valine 951 shows a compositional bias: basic and acidic residues.

The protein belongs to the histidine acid phosphatase family. VIP1 subfamily.

The protein resides in the cytoplasm. It is found in the cytosol. It catalyses the reaction 1D-myo-inositol hexakisphosphate + ATP = 1-diphospho-1D-myo-inositol 2,3,4,5,6-pentakisphosphate + ADP. The enzyme catalyses 5-diphospho-1D-myo-inositol 1,2,3,4,6-pentakisphosphate + ATP + H(+) = 1,5-bis(diphospho)-1D-myo-inositol 2,3,4,6-tetrakisphosphate + ADP. In terms of biological role, bifunctional inositol kinase that acts in concert with the IP6K kinases IP6K1, IP6K2 and IP6K3 to synthesize the diphosphate group-containing inositol pyrophosphates diphosphoinositol pentakisphosphate, PP-InsP5, and bis-diphosphoinositol tetrakisphosphate, (PP)2-InsP4. PP-InsP5 and (PP)2-InsP4, also respectively called InsP7 and InsP8, regulate a variety of cellular processes, including apoptosis, vesicle trafficking, cytoskeletal dynamics, exocytosis, insulin signaling and neutrophil activation. Phosphorylates inositol hexakisphosphate (InsP6) at position 1 to produce PP-InsP5 which is in turn phosphorylated by IP6Ks to produce (PP)2-InsP4. Alternatively, phosphorylates PP-InsP5 at position 1, produced by IP6Ks from InsP6, to produce (PP)2-InsP4. The sequence is that of Inositol hexakisphosphate and diphosphoinositol-pentakisphosphate kinase 2 from Xenopus laevis (African clawed frog).